We begin with the raw amino-acid sequence, 319 residues long: D-alanine--D-alanine ligase B (319 aa).

In terms of domain architecture, ATP-grasp spans Lys117 to Ala312. Residue Ala143–Thr198 coordinates ATP. Mg(2+)-binding residues include Asp266, Glu279, and Asn281.

The protein belongs to the D-alanine--D-alanine ligase family. It depends on Mg(2+) as a cofactor. Requires Mn(2+) as cofactor.

Its subcellular location is the cytoplasm. It catalyses the reaction 2 D-alanine + ATP = D-alanyl-D-alanine + ADP + phosphate + H(+). Its pathway is cell wall biogenesis; peptidoglycan biosynthesis. Functionally, cell wall formation. This chain is D-alanine--D-alanine ligase B, found in Pseudomonas syringae pv. tomato (strain ATCC BAA-871 / DC3000).